Consider the following 150-residue polypeptide: UPF0178 protein ASA_3749 (150 aa).

Belongs to the UPF0178 family.

The chain is UPF0178 protein ASA_3749 from Aeromonas salmonicida (strain A449).